A 31-amino-acid polypeptide reads, in one-letter code: Hemocyanin subunit 2 (31 aa).

Belongs to the tyrosinase family. Hemocyanin subfamily. Hemolymph.

It is found in the secreted. It localises to the extracellular space. Functionally, hemocyanins are copper-containing oxygen carriers occurring freely dissolved in the hemolymph of many mollusks and arthropods. In Maja squinado (Mediterranean spider crab), this protein is Hemocyanin subunit 2.